Here is a 487-residue protein sequence, read N- to C-terminus: N-succinylglutamate 5-semialdehyde dehydrogenase (487 aa).

An NAD(+)-binding site is contributed by 221–226 (GSSDTG). Residues Glu244 and Cys278 contribute to the active site.

Belongs to the aldehyde dehydrogenase family. AstD subfamily.

It carries out the reaction N-succinyl-L-glutamate 5-semialdehyde + NAD(+) + H2O = N-succinyl-L-glutamate + NADH + 2 H(+). Its pathway is amino-acid degradation; L-arginine degradation via AST pathway; L-glutamate and succinate from L-arginine: step 4/5. Catalyzes the NAD-dependent reduction of succinylglutamate semialdehyde into succinylglutamate. The protein is N-succinylglutamate 5-semialdehyde dehydrogenase of Burkholderia ambifaria (strain MC40-6).